The primary structure comprises 387 residues: Chorismate synthase (387 aa).

2 residues coordinate NADP(+): arginine 40 and arginine 46. FMN is bound by residues arginine 129–serine 131, glutamine 250–alanine 251, glycine 295, lysine 310–threonine 314, and arginine 336.

It belongs to the chorismate synthase family. As to quaternary structure, homotetramer. The cofactor is FMNH2.

It catalyses the reaction 5-O-(1-carboxyvinyl)-3-phosphoshikimate = chorismate + phosphate. It participates in metabolic intermediate biosynthesis; chorismate biosynthesis; chorismate from D-erythrose 4-phosphate and phosphoenolpyruvate: step 7/7. In terms of biological role, catalyzes the anti-1,4-elimination of the C-3 phosphate and the C-6 proR hydrogen from 5-enolpyruvylshikimate-3-phosphate (EPSP) to yield chorismate, which is the branch point compound that serves as the starting substrate for the three terminal pathways of aromatic amino acid biosynthesis. This reaction introduces a second double bond into the aromatic ring system. This is Chorismate synthase from Desulforamulus reducens (strain ATCC BAA-1160 / DSM 100696 / MI-1) (Desulfotomaculum reducens).